The following is a 424-amino-acid chain: UPF0597 protein Shewana3_2972 (424 aa).

Belongs to the UPF0597 family.

The chain is UPF0597 protein Shewana3_2972 from Shewanella sp. (strain ANA-3).